The following is a 273-amino-acid chain: Dermonecrotic toxin LspiSicTox-betaIE1i (273 aa).

E25 and D27 together coordinate Mg(2+). Residue H41 is the Nucleophile of the active site. C45 and C51 are joined by a disulfide. A Mg(2+)-binding site is contributed by D85.

Belongs to the arthropod phospholipase D family. Class I subfamily. Mg(2+) serves as cofactor. In terms of tissue distribution, expressed by the venom gland.

It is found in the secreted. The catalysed reaction is an N-(acyl)-sphingosylphosphocholine = an N-(acyl)-sphingosyl-1,3-cyclic phosphate + choline. It carries out the reaction an N-(acyl)-sphingosylphosphoethanolamine = an N-(acyl)-sphingosyl-1,3-cyclic phosphate + ethanolamine. It catalyses the reaction a 1-acyl-sn-glycero-3-phosphocholine = a 1-acyl-sn-glycero-2,3-cyclic phosphate + choline. The enzyme catalyses a 1-acyl-sn-glycero-3-phosphoethanolamine = a 1-acyl-sn-glycero-2,3-cyclic phosphate + ethanolamine. Its function is as follows. Dermonecrotic toxins cleave the phosphodiester linkage between the phosphate and headgroup of certain phospholipids (sphingolipid and lysolipid substrates), forming an alcohol (often choline) and a cyclic phosphate. This toxin acts on sphingomyelin (SM). It may also act on ceramide phosphoethanolamine (CPE), lysophosphatidylcholine (LPC) and lysophosphatidylethanolamine (LPE), but not on lysophosphatidylserine (LPS), and lysophosphatidylglycerol (LPG). It acts by transphosphatidylation, releasing exclusively cyclic phosphate products as second products. Induces dermonecrosis, hemolysis, increased vascular permeability, edema, inflammatory response, and platelet aggregation. The sequence is that of Dermonecrotic toxin LspiSicTox-betaIE1i from Loxosceles spinulosa (Recluse spider).